We begin with the raw amino-acid sequence, 160 residues long: Globin-like protein (160 aa).

The Globin domain maps to 2-152 (SMTRQEIQDL…FNAECQVHLK (151 aa)). H101 contributes to the heme binding site.

This sequence belongs to the globin family.

The protein localises to the cytoplasm. May be a globin and may play a role in oxygen transport. In Caenorhabditis briggsae, this protein is Globin-like protein (glb-1).